A 477-amino-acid chain; its full sequence is UTP--glucose-1-phosphate uridylyltransferase (477 aa).

At Ala2 the chain carries N-acetylalanine. Residues 92-95 (LNGG), Lys106, Gln169, and Gly198 each bind UTP. Residue 94–95 (GG) participates in substrate binding. Substrate-binding positions include His199 and 227–229 (NSD). 2 residues coordinate UTP: Asp229 and Lys367.

This sequence belongs to the UDPGP type 1 family. As to quaternary structure, monomer. The cofactor is Mg(2+).

The protein resides in the cytoplasm. The enzyme catalyses alpha-D-glucose 1-phosphate + UTP + H(+) = UDP-alpha-D-glucose + diphosphate. With respect to regulation, inhibition by uncomplexed, free UTP. Functionally, plays a central role as a glucosyl donor in cellular metabolic pathways. The sequence is that of UTP--glucose-1-phosphate uridylyltransferase from Solanum tuberosum (Potato).